A 127-amino-acid polypeptide reads, in one-letter code: Small ribosomal subunit protein bS6 (127 aa).

The interval 102 to 127 (IMQGAEKGKSSRKEKVDAEAEASEEA) is disordered. Residues 107 to 119 (EKGKSSRKEKVDA) are compositionally biased toward basic and acidic residues.

The protein belongs to the bacterial ribosomal protein bS6 family.

Binds together with bS18 to 16S ribosomal RNA. In Coxiella burnetii (strain CbuK_Q154) (Coxiella burnetii (strain Q154)), this protein is Small ribosomal subunit protein bS6.